Here is a 591-residue protein sequence, read N- to C-terminus: V-type ATP synthase alpha chain (591 aa).

Residue 242 to 249 (GPFGAGKT) coordinates ATP.

The protein belongs to the ATPase alpha/beta chains family.

The catalysed reaction is ATP + H2O + 4 H(+)(in) = ADP + phosphate + 5 H(+)(out). In terms of biological role, produces ATP from ADP in the presence of a proton gradient across the membrane. The V-type alpha chain is a catalytic subunit. The polypeptide is V-type ATP synthase alpha chain (Chlamydia trachomatis serovar L2 (strain ATCC VR-902B / DSM 19102 / 434/Bu)).